The chain runs to 312 residues: tRNA-cytidine(32) 2-sulfurtransferase (312 aa).

The short motif at 39 to 44 is the PP-loop motif element; it reads SGGKDS. Positions 114, 117, and 205 each coordinate [4Fe-4S] cluster.

It belongs to the TtcA family. In terms of assembly, homodimer. Requires Mg(2+) as cofactor. [4Fe-4S] cluster serves as cofactor.

It localises to the cytoplasm. It catalyses the reaction cytidine(32) in tRNA + S-sulfanyl-L-cysteinyl-[cysteine desulfurase] + AH2 + ATP = 2-thiocytidine(32) in tRNA + L-cysteinyl-[cysteine desulfurase] + A + AMP + diphosphate + H(+). The protein operates within tRNA modification. Its function is as follows. Catalyzes the ATP-dependent 2-thiolation of cytidine in position 32 of tRNA, to form 2-thiocytidine (s(2)C32). The sulfur atoms are provided by the cysteine/cysteine desulfurase (IscS) system. This is tRNA-cytidine(32) 2-sulfurtransferase from Ralstonia nicotianae (strain ATCC BAA-1114 / GMI1000) (Ralstonia solanacearum).